Reading from the N-terminus, the 485-residue chain is Ribulose bisphosphate carboxylase large chain (485 aa).

A propeptide spanning residues 1–2 (MS) is cleaved from the precursor. Pro3 is modified (N-acetylproline). Lys14 carries the post-translational modification N6,N6,N6-trimethyllysine. Substrate-binding residues include Asn123 and Thr173. The Proton acceptor role is filled by Lys175. Lys177 provides a ligand contact to substrate. Lys201, Asp203, and Glu204 together coordinate Mg(2+). Residue Lys201 is modified to N6-carboxylysine. His294 serves as the catalytic Proton acceptor. The substrate site is built by Arg295, His327, and Ser379.

It belongs to the RuBisCO large chain family. Type I subfamily. Heterohexadecamer of 8 large chains and 8 small chains; disulfide-linked. The disulfide link is formed within the large subunit homodimers. Mg(2+) is required as a cofactor. The disulfide bond which can form in the large chain dimeric partners within the hexadecamer appears to be associated with oxidative stress and protein turnover.

It is found in the plastid. The protein localises to the chloroplast. The enzyme catalyses 2 (2R)-3-phosphoglycerate + 2 H(+) = D-ribulose 1,5-bisphosphate + CO2 + H2O. It carries out the reaction D-ribulose 1,5-bisphosphate + O2 = 2-phosphoglycolate + (2R)-3-phosphoglycerate + 2 H(+). Functionally, ruBisCO catalyzes two reactions: the carboxylation of D-ribulose 1,5-bisphosphate, the primary event in carbon dioxide fixation, as well as the oxidative fragmentation of the pentose substrate in the photorespiration process. Both reactions occur simultaneously and in competition at the same active site. In Bartlettina sordida (Purple torch), this protein is Ribulose bisphosphate carboxylase large chain.